Consider the following 343-residue polypeptide: Ribosomal RNA small subunit methyltransferase C (343 aa).

The protein belongs to the methyltransferase superfamily. RsmC family. In terms of assembly, monomer.

The protein localises to the cytoplasm. The catalysed reaction is guanosine(1207) in 16S rRNA + S-adenosyl-L-methionine = N(2)-methylguanosine(1207) in 16S rRNA + S-adenosyl-L-homocysteine + H(+). Specifically methylates the guanine in position 1207 of 16S rRNA in the 30S particle. This Shigella flexneri serotype 5b (strain 8401) protein is Ribosomal RNA small subunit methyltransferase C.